The following is a 561-amino-acid chain: Interleukin-1 receptor-like 2 (561 aa).

An N-terminal signal peptide occupies residues 1 to 21 (MGMPPLLFCWVSFVLPLFVAA). 3 consecutive Ig-like C2-type domains span residues 22-113 (GNCT…INLT), 128-215 (SINS…VRNY), and 225-321 (SGGR…TCHA). Residues 22–338 (GNCTDVYMHH…ILKRPAPDFR (317 aa)) lie on the Extracellular side of the membrane. Residues N23, N43, N55, N111, and N130 are each glycosylated (N-linked (GlcNAc...) asparagine). C44 and C97 are joined by a disulfide. C149 and C199 form a disulfide bridge. N-linked (GlcNAc...) asparagine glycosylation is found at N231, N237, N253, N269, N290, and N302. C252 and C319 are oxidised to a cystine. The helical transmembrane segment at 339 to 358 (AYLIGGLMAFLLLAVSILYI) threads the bilayer. Residues 359-561 (YNTFKVDIVL…LLGHTPRIPG (203 aa)) lie on the Cytoplasmic side of the membrane. The TIR domain occupies 384–539 (KLYDAYVLYP…KFWKKVRYHM (156 aa)). The active site involves E470.

It belongs to the interleukin-1 receptor family. In terms of assembly, interacts with IL1RAP; the association is enhanced by IL36B indicative for an functional signaling complex and inhibited by IL36RN. Predominant expression in the lung and epididymis, with lower expression in cerebral cortex and testis. Expression in the brain is non-neuronal and associated with the cerebral vasculature. Not detected in any cell line tested.

Its subcellular location is the membrane. The catalysed reaction is NAD(+) + H2O = ADP-D-ribose + nicotinamide + H(+). Its function is as follows. Receptor for interleukin-36 (IL36A, IL36B and IL36G). After binding to interleukin-36 associates with the coreceptor IL1RAP to form the interleukin-36 receptor complex which mediates interleukin-36-dependent activation of NF-kappa-B, MAPK and other pathways. The IL-36 signaling system is thought to be present in epithelial barriers and to take part in local inflammatory response; it is similar to the IL-1 system. Seems to be involved in skin inflammatory response by induction of the IL-23/IL-17/IL-22 pathway. Receptor for the interleukin IL36G. Binding to the agonist leads to the activation of NF-kappa-B. This is Interleukin-1 receptor-like 2 (Il1rl2) from Rattus norvegicus (Rat).